A 306-amino-acid polypeptide reads, in one-letter code: Ankyrin repeat domain-containing protein 23 (306 aa).

The stretch at Q41–K90 forms a coiled coil. The disordered stretch occupies residues L78–P107. Over residues Q80–V91 the composition is skewed to basic residues. ANK repeat units follow at residues L144–V173, L177–A206, I210–A239, and E243–V272. The interval R179 to R196 is interaction with TTN.

As to quaternary structure, interacts with titin/TTN and MYPN.

Its subcellular location is the nucleus. Its function is as follows. May be involved in the energy metabolism. Could be a molecular link between myofibrillar stretch-induced signaling pathways and muscle gene expression. This Mus musculus (Mouse) protein is Ankyrin repeat domain-containing protein 23 (Ankrd23).